A 407-amino-acid chain; its full sequence is ATP-citrate synthase subunit alpha chain protein 1 (407 aa).

3 residues coordinate citrate: asparagine 327, threonine 329, and arginine 360.

The protein belongs to the succinate/malate CoA ligase beta subunit family. As to quaternary structure, heterooctamer of 4 alpha and 4 beta chains.

The protein localises to the cytoplasm. It localises to the cytosol. It catalyses the reaction oxaloacetate + acetyl-CoA + ADP + phosphate = citrate + ATP + CoA. In terms of biological role, ATP citrate-lyase is the primary enzyme responsible for the synthesis of cytosolic acetyl-CoA, used for the elongation of fatty acids and biosynthesis of isoprenoids, flavonoids and malonated derivatives. May supply substrate to the cytosolic acetyl-CoA carboxylase, which generates the malonyl-CoA used for the synthesis of a multitude of compounds, including very long chain fatty acids and flavonoids. In contrast to all known animal ACL enzymes having a homomeric structure, plant ACLs are composed of alpha and beta chains. The protein is ATP-citrate synthase subunit alpha chain protein 1 (ACLA-1) of Oryza sativa subsp. japonica (Rice).